The following is a 179-amino-acid chain: NADH dehydrogenase [ubiquinone] 1 beta subcomplex subunit 9 (179 aa).

Residue alanine 2 is modified to N-acetylalanine. At serine 85 the chain carries Phosphoserine. Residues 136-162 (EVKQLQEETPPGGPLTEALPPARKEGD) form a disordered region.

Belongs to the complex I LYR family. As to quaternary structure, mammalian complex I is composed of 45 different subunits.

Its subcellular location is the mitochondrion inner membrane. Its function is as follows. Accessory subunit of the mitochondrial membrane respiratory chain NADH dehydrogenase (Complex I), that is believed to be not involved in catalysis. Complex I functions in the transfer of electrons from NADH to the respiratory chain. The immediate electron acceptor for the enzyme is believed to be ubiquinone. The polypeptide is NADH dehydrogenase [ubiquinone] 1 beta subcomplex subunit 9 (NDUFB9) (Homo sapiens (Human)).